The sequence spans 307 residues: Methionyl-tRNA formyltransferase (307 aa).

A (6S)-5,6,7,8-tetrahydrofolate-binding site is contributed by 109-112; sequence SLLP.

It belongs to the Fmt family.

The enzyme catalyses L-methionyl-tRNA(fMet) + (6R)-10-formyltetrahydrofolate = N-formyl-L-methionyl-tRNA(fMet) + (6S)-5,6,7,8-tetrahydrofolate + H(+). Its function is as follows. Attaches a formyl group to the free amino group of methionyl-tRNA(fMet). The formyl group appears to play a dual role in the initiator identity of N-formylmethionyl-tRNA by promoting its recognition by IF2 and preventing the misappropriation of this tRNA by the elongation apparatus. In Mycobacteroides abscessus (strain ATCC 19977 / DSM 44196 / CCUG 20993 / CIP 104536 / JCM 13569 / NCTC 13031 / TMC 1543 / L948) (Mycobacterium abscessus), this protein is Methionyl-tRNA formyltransferase.